The sequence spans 76 residues: Small ribosomal subunit protein bS18 (76 aa).

It belongs to the bacterial ribosomal protein bS18 family. Part of the 30S ribosomal subunit. Forms a tight heterodimer with protein bS6.

Its function is as follows. Binds as a heterodimer with protein bS6 to the central domain of the 16S rRNA, where it helps stabilize the platform of the 30S subunit. The sequence is that of Small ribosomal subunit protein bS18 from Ectopseudomonas mendocina (strain ymp) (Pseudomonas mendocina).